Here is a 296-residue protein sequence, read N- to C-terminus: ADP-dependent (S)-NAD(P)H-hydrate dehydratase (296 aa).

The YjeF C-terminal domain maps to 18-292 (TALRFPHVFK…PAARWLRNRI (275 aa)). (6S)-NADPHX-binding residues include Ala53, Gly113, and His165. AMP is bound by residues 202–206 (KGHKT) and Gly231. Asp232 serves as a coordination point for (6S)-NADPHX.

Belongs to the NnrD/CARKD family. In terms of assembly, homotetramer. Requires Mg(2+) as cofactor.

The catalysed reaction is (6S)-NADHX + ADP = AMP + phosphate + NADH + H(+). It catalyses the reaction (6S)-NADPHX + ADP = AMP + phosphate + NADPH + H(+). Its function is as follows. Catalyzes the dehydration of the S-form of NAD(P)HX at the expense of ADP, which is converted to AMP. Together with NAD(P)HX epimerase, which catalyzes the epimerization of the S- and R-forms, the enzyme allows the repair of both epimers of NAD(P)HX, a damaged form of NAD(P)H that is a result of enzymatic or heat-dependent hydration. The polypeptide is ADP-dependent (S)-NAD(P)H-hydrate dehydratase (Neisseria meningitidis serogroup B (strain ATCC BAA-335 / MC58)).